The primary structure comprises 482 residues: Adenylyltransferase and sulfurtransferase uba4 (482 aa).

ATP-binding positions include G93, D114, 121–125 (SNLHR), K138, and 182–183 (DN). Zn(2+) contacts are provided by C231 and C234. Catalysis depends on C248, which acts as the Glycyl thioester intermediate; for adenylyltransferase activity. Residues C309 and C312 each coordinate Zn(2+). In terms of domain architecture, Rhodanese spans 362–480 (EEKEPTIIDV…WKEQVDPEWP (119 aa)). The Cysteine persulfide intermediate; for sulfurtransferase activity role is filled by C435.

This sequence in the N-terminal section; belongs to the HesA/MoeB/ThiF family. UBA4 subfamily. Zn(2+) is required as a cofactor.

The protein resides in the cytoplasm. It localises to the cytosol. It carries out the reaction [molybdopterin-synthase sulfur-carrier protein]-C-terminal Gly-Gly + ATP + H(+) = [molybdopterin-synthase sulfur-carrier protein]-C-terminal Gly-Gly-AMP + diphosphate. The enzyme catalyses [molybdopterin-synthase sulfur-carrier protein]-C-terminal Gly-Gly-AMP + S-sulfanyl-L-cysteinyl-[cysteine desulfurase] + AH2 = [molybdopterin-synthase sulfur-carrier protein]-C-terminal-Gly-aminoethanethioate + L-cysteinyl-[cysteine desulfurase] + A + AMP + 2 H(+). It participates in tRNA modification; 5-methoxycarbonylmethyl-2-thiouridine-tRNA biosynthesis. It functions in the pathway cofactor biosynthesis; molybdopterin biosynthesis. Plays a central role in 2-thiolation of mcm(5)S(2)U at tRNA wobble positions of cytosolic tRNA(Lys), tRNA(Glu) and tRNA(Gln). Also essential during biosynthesis of the molybdenum cofactor. Acts by mediating the C-terminal thiocarboxylation of sulfur carriers urm1 and mocs2a. Its N-terminus first activates urm1 and mocs2a as acyl-adenylates (-COAMP), then the persulfide sulfur on the catalytic cysteine is transferred to urm1 and mocs2a to form thiocarboxylation (-COSH) of their C-terminus. The reaction probably involves hydrogen sulfide that is generated from the persulfide intermediate and that acts as a nucleophile towards urm1 and mocs2a. Subsequently, a transient disulfide bond is formed. Does not use thiosulfate as sulfur donor; nfs1 probably acting as a sulfur donor for thiocarboxylation reactions. This Aspergillus niger (strain ATCC MYA-4892 / CBS 513.88 / FGSC A1513) protein is Adenylyltransferase and sulfurtransferase uba4.